Consider the following 245-residue polypeptide: tRNA (guanine-N(1)-)-methyltransferase (245 aa).

Residues Gly-113 and Ile-133–Leu-138 contribute to the S-adenosyl-L-methionine site.

It belongs to the RNA methyltransferase TrmD family. In terms of assembly, homodimer.

The protein resides in the cytoplasm. It carries out the reaction guanosine(37) in tRNA + S-adenosyl-L-methionine = N(1)-methylguanosine(37) in tRNA + S-adenosyl-L-homocysteine + H(+). Specifically methylates guanosine-37 in various tRNAs. This Oceanobacillus iheyensis (strain DSM 14371 / CIP 107618 / JCM 11309 / KCTC 3954 / HTE831) protein is tRNA (guanine-N(1)-)-methyltransferase.